The following is a 1041-amino-acid chain: Leucine-rich repeat receptor-like protein kinase TDR (1041 aa).

The first 29 residues, 1–29 (MKKKNISPSLVLHPLLLLLLPFFAFNSLA), serve as a signal peptide directing secretion. Residues 30–652 (LKFSPQLLSL…HHKEERPKKT (623 aa)) lie on the Extracellular side of the membrane. A disulfide bridge links cysteine 69 with cysteine 76. 3 N-linked (GlcNAc...) asparagine glycosylation sites follow: asparagine 78, asparagine 92, and asparagine 111. 21 LRR repeats span residues 80–104 (TAQV…IRYL), 105–128 (SSLL…IFDL), 130–152 (KLTT…ISKL), 154–176 (FLKV…VSRL), 177–199 (RFLE…AYGG), 200–224 (LQRL…LGLL), 225–248 (TELQ…FALL), 250–272 (NLKY…LGNL), 273–296 (SNLE…YSNL), 297–319 (KSLK…GFST), 321–344 (KNLT…IGEL), 345–368 (PELT…LGSN), 369–392 (GKLE…LCHG), 394–416 (KLYK…LTRC), 418–439 (SLWR…GFGS), 440–464 (LRNL…FATA), 466–488 (VLQY…IWKA), 511–535 (CKSF…IGHC), 536–558 (EKLL…EIST), 559–583 (LPSI…FGSS), and 585–607 (TITT…SFAH). Positions 186 to 188 (GSY) are CLE peptide binding. Positions 233 to 235 (GYN) are CLE peptide binding. Residues asparagine 258 and asparagine 271 are each glycosylated (N-linked (GlcNAc...) asparagine). Residues 303 to 307 (DFSSN) form a CLE peptide binding region. Residues asparagine 322, asparagine 332, and asparagine 356 are each glycosylated (N-linked (GlcNAc...) asparagine). The CLE peptide binding stretch occupies residues 375–377 (DVS). Asparagine 378 carries an N-linked (GlcNAc...) asparagine glycan. Cysteine 390 and cysteine 416 are joined by a disulfide. A CLE peptide binding region spans residues 421–423 (RFR). 5 N-linked (GlcNAc...) asparagine glycosylation sites follow: asparagine 430, asparagine 442, asparagine 471, asparagine 525, and asparagine 542. A disulfide bond links cysteine 511 and cysteine 535. Asparagine 590 carries N-linked (GlcNAc...) asparagine glycosylation. A disulfide bond links cysteine 620 and cysteine 628. A helical membrane pass occupies residues 653 to 673 (AGAIVWILAAAIGVGFFVLVA). Over 674-1041 (ATRCFQKSYG…HDVKCQRIGV (368 aa)) the chain is Cytoplasmic. The residue at position 710 (threonine 710) is a Phosphothreonine. The 283-residue stretch at 719–1001 (SKTDNILGMG…DVLLILQEAK (283 aa)) folds into the Protein kinase domain. ATP contacts are provided by residues 725 to 733 (LGMGSTGTV) and lysine 747. Phosphotyrosine is present on residues tyrosine 798 and tyrosine 839. The active-site Proton acceptor is aspartate 852. A Phosphoserine modification is found at serine 884. 2 positions are modified to phosphotyrosine: tyrosine 892 and tyrosine 899. Phosphothreonine is present on threonine 900.

Belongs to the protein kinase superfamily. Ser/Thr protein kinase family. In terms of assembly, interacts specifically with the mature peptides CLE41p and CLE44p, especially in the presence of SERK2. Interacts with LURE1.2. As to expression, widely expressed along the vascular strands. In roots and hypocotyls, confined to procambial cells.

It is found in the cell membrane. The catalysed reaction is L-seryl-[protein] + ATP = O-phospho-L-seryl-[protein] + ADP + H(+). The enzyme catalyses L-threonyl-[protein] + ATP = O-phospho-L-threonyl-[protein] + ADP + H(+). In terms of biological role, acts with CLE41p and CLE44p peptides as a ligand-receptor pair in a signal transduction pathway involved in the regulation of procambium maintenance and polarity during vascular-tissue development. Mediates repression of tracheary element differentiation and the promotion of procambial cells formation and polar division adjacent to phloem cells in the veins. This chain is Leucine-rich repeat receptor-like protein kinase TDR, found in Arabidopsis thaliana (Mouse-ear cress).